A 492-amino-acid chain; its full sequence is Glutamyl-tRNA(Gln) amidotransferase subunit A (492 aa).

Residues K78 and S158 each act as charge relay system in the active site. The active-site Acyl-ester intermediate is S182.

The protein belongs to the amidase family. GatA subfamily. Heterotrimer of A, B and C subunits.

It carries out the reaction L-glutamyl-tRNA(Gln) + L-glutamine + ATP + H2O = L-glutaminyl-tRNA(Gln) + L-glutamate + ADP + phosphate + H(+). In terms of biological role, allows the formation of correctly charged Gln-tRNA(Gln) through the transamidation of misacylated Glu-tRNA(Gln) in organisms which lack glutaminyl-tRNA synthetase. The reaction takes place in the presence of glutamine and ATP through an activated gamma-phospho-Glu-tRNA(Gln). The protein is Glutamyl-tRNA(Gln) amidotransferase subunit A of Orientia tsutsugamushi (strain Ikeda) (Rickettsia tsutsugamushi).